The chain runs to 448 residues: Bifunctional protein GlmU (448 aa).

Residues 1 to 232 form a pyrophosphorylase region; the sequence is MTARSSLTIV…EDEVRGINTK (232 aa). Residues 11–14, Lys25, Gln78, and 83–84 contribute to the UDP-N-acetyl-alpha-D-glucosamine site; these read LAAG and GT. Asp108 is a Mg(2+) binding site. 4 residues coordinate UDP-N-acetyl-alpha-D-glucosamine: Gly144, Glu158, Asn173, and Asn230. Residue Asn230 participates in Mg(2+) binding. The segment at 233–253 is linker; it reads AQLAQAEAAMQARLRQAAMDA. The segment at 254–448 is N-acetyltransferase; the sequence is GVTLIAPETV…FRNAKLRQTK (195 aa). Residues Arg319 and Lys337 each coordinate UDP-N-acetyl-alpha-D-glucosamine. The Proton acceptor role is filled by His349. The UDP-N-acetyl-alpha-D-glucosamine site is built by Tyr352 and Asn363. Acetyl-CoA contacts are provided by residues Ala366, 372-373, Ser409, and Arg426; that span reads NY. Residues 427 to 448 are disordered; that stretch reads SPQTTKEGAAARFRNAKLRQTK.

This sequence in the N-terminal section; belongs to the N-acetylglucosamine-1-phosphate uridyltransferase family. It in the C-terminal section; belongs to the transferase hexapeptide repeat family. As to quaternary structure, homotrimer. Mg(2+) is required as a cofactor.

It is found in the cytoplasm. The enzyme catalyses alpha-D-glucosamine 1-phosphate + acetyl-CoA = N-acetyl-alpha-D-glucosamine 1-phosphate + CoA + H(+). The catalysed reaction is N-acetyl-alpha-D-glucosamine 1-phosphate + UTP + H(+) = UDP-N-acetyl-alpha-D-glucosamine + diphosphate. The protein operates within nucleotide-sugar biosynthesis; UDP-N-acetyl-alpha-D-glucosamine biosynthesis; N-acetyl-alpha-D-glucosamine 1-phosphate from alpha-D-glucosamine 6-phosphate (route II): step 2/2. Its pathway is nucleotide-sugar biosynthesis; UDP-N-acetyl-alpha-D-glucosamine biosynthesis; UDP-N-acetyl-alpha-D-glucosamine from N-acetyl-alpha-D-glucosamine 1-phosphate: step 1/1. It participates in bacterial outer membrane biogenesis; LPS lipid A biosynthesis. Catalyzes the last two sequential reactions in the de novo biosynthetic pathway for UDP-N-acetylglucosamine (UDP-GlcNAc). The C-terminal domain catalyzes the transfer of acetyl group from acetyl coenzyme A to glucosamine-1-phosphate (GlcN-1-P) to produce N-acetylglucosamine-1-phosphate (GlcNAc-1-P), which is converted into UDP-GlcNAc by the transfer of uridine 5-monophosphate (from uridine 5-triphosphate), a reaction catalyzed by the N-terminal domain. The chain is Bifunctional protein GlmU from Bradyrhizobium sp. (strain ORS 278).